Here is a 415-residue protein sequence, read N- to C-terminus: Adenosylhomocysteinase (415 aa).

Residues threonine 53, aspartate 124, and glutamate 147 each contribute to the substrate site. 148-150 (TTT) lines the NAD(+) pocket. 2 residues coordinate substrate: lysine 177 and aspartate 181. Residues asparagine 182, 211–216 (GYGWVG), glutamate 234, asparagine 269, 290–292 (SGH), and asparagine 337 each bind NAD(+).

This sequence belongs to the adenosylhomocysteinase family. NAD(+) is required as a cofactor.

It localises to the cytoplasm. The enzyme catalyses S-adenosyl-L-homocysteine + H2O = L-homocysteine + adenosine. The protein operates within amino-acid biosynthesis; L-homocysteine biosynthesis; L-homocysteine from S-adenosyl-L-homocysteine: step 1/1. May play a key role in the regulation of the intracellular concentration of adenosylhomocysteine. This Sulfolobus acidocaldarius (strain ATCC 33909 / DSM 639 / JCM 8929 / NBRC 15157 / NCIMB 11770) protein is Adenosylhomocysteinase.